The following is a 211-amino-acid chain: Adenylate kinase (211 aa).

10 to 15 contributes to the ATP binding site; that stretch reads GSGKGT. The segment at 30–59 is NMP; it reads STGDLFRENILNSTTLGKEIKKIVEKGELV. AMP-binding positions include threonine 31, arginine 36, 57-59, 85-88, and glutamine 92; these read ELV and GFPR. Residues 121-158 form an LID region; the sequence is GRRICKSCNNIFNIYTLATKKNGICDVCKGDLYQREDD. Arginine 122 is a binding site for ATP. Positions 125 and 128 each coordinate Zn(2+). 131–132 contributes to the ATP binding site; sequence IF. Residues cysteine 145 and cysteine 148 each coordinate Zn(2+). 2 residues coordinate AMP: arginine 155 and arginine 166. Valine 194 serves as a coordination point for ATP.

This sequence belongs to the adenylate kinase family. Monomer.

It localises to the cytoplasm. It carries out the reaction AMP + ATP = 2 ADP. It functions in the pathway purine metabolism; AMP biosynthesis via salvage pathway; AMP from ADP: step 1/1. In terms of biological role, catalyzes the reversible transfer of the terminal phosphate group between ATP and AMP. Plays an important role in cellular energy homeostasis and in adenine nucleotide metabolism. The chain is Adenylate kinase from Borrelia garinii subsp. bavariensis (strain ATCC BAA-2496 / DSM 23469 / PBi) (Borreliella bavariensis).